The chain runs to 473 residues: NAC domain-containing protein 68 (473 aa).

The NAC domain occupies 4 to 154; the sequence is GLIGYRFSPT…KYVVCQVKYK (151 aa). The DNA-binding element occupies 108–160; it reads IGIKKTLVYHEGKSPHGVRTPWVMHEYHITCLPHHKRKYVVCQVKYKGEAAEI. The interval 326 to 380 is disordered; sequence DHMPRKPVTGTIDYSSDSGSDAGSISTTSYQGTSSPNISVGSSSRHLSSCSSTDS. Composition is skewed to low complexity over residues 340-354 and 364-379; these read SSDSGSDAGSISTTS and SVGSSSRHLSSCSSTD. The chain crosses the membrane as a helical span at residues 446–468; sequence FIYLMKMIIGNIISVLLPVKRLI.

It is found in the membrane. Its subcellular location is the nucleus. Its function is as follows. Transcription activator activated by proteolytic cleavage through regulated intramembrane proteolysis (RIP) mediated by calpain or its functional homolog. Regulates cytokinin signaling during cell division. The polypeptide is NAC domain-containing protein 68 (NAC68) (Arabidopsis thaliana (Mouse-ear cress)).